The sequence spans 363 residues: Flagellar P-ring protein (363 aa).

The first 20 residues, 1–20 (MKYKLVLAVAVLVFSLPSQA), serve as a signal peptide directing secretion.

This sequence belongs to the FlgI family. As to quaternary structure, the basal body constitutes a major portion of the flagellar organelle and consists of four rings (L,P,S, and M) mounted on a central rod.

Its subcellular location is the periplasm. The protein localises to the bacterial flagellum basal body. Its function is as follows. Assembles around the rod to form the L-ring and probably protects the motor/basal body from shearing forces during rotation. The chain is Flagellar P-ring protein from Shewanella baltica (strain OS223).